Consider the following 466-residue polypeptide: 3-isopropylmalate dehydratase large subunit (466 aa).

3 residues coordinate [4Fe-4S] cluster: Cys-347, Cys-407, and Cys-410.

This sequence belongs to the aconitase/IPM isomerase family. LeuC type 1 subfamily. As to quaternary structure, heterodimer of LeuC and LeuD. [4Fe-4S] cluster serves as cofactor.

The catalysed reaction is (2R,3S)-3-isopropylmalate = (2S)-2-isopropylmalate. The protein operates within amino-acid biosynthesis; L-leucine biosynthesis; L-leucine from 3-methyl-2-oxobutanoate: step 2/4. In terms of biological role, catalyzes the isomerization between 2-isopropylmalate and 3-isopropylmalate, via the formation of 2-isopropylmaleate. The chain is 3-isopropylmalate dehydratase large subunit from Klebsiella pneumoniae (strain 342).